The following is a 443-amino-acid chain: KICSTOR complex protein ITFG2 (443 aa).

An FG-GAP 1; atypical repeat occupies 19 to 48 (FPHAICLGDVDNDALNELVVGDTSGKLSVY). Phosphoserine is present on Ser-104. The stretch at 125–154 (NTKVMLISDIDGDGCYELVVGYTDRVVRAF) is one FG-GAP 2; atypical repeat. At Ser-219 the chain carries Phosphoserine.

Part of the KICSTOR complex composed of KPTN, ITFG2, KICS2 and SZT2. SZT2 probably serves as a link between the other three proteins in the KICSTOR complex and may mediate the direct interaction with the GATOR complex via GATOR1. The KICSTOR complex interacts directly with the GATOR1 complex and most probably indirectly with the GATOR2 complex in an amino acid-independent manner.

The protein resides in the lysosome membrane. Its function is as follows. As part of the KICSTOR complex functions in the amino acid-sensing branch of the TORC1 signaling pathway. Recruits, in an amino acid-independent manner, the GATOR1 complex to the lysosomal membranes and allows its interaction with GATOR2 and the RAG GTPases. Functions upstream of the RAG GTPases and is required to negatively regulate mTORC1 signaling in absence of amino acids. In absence of the KICSTOR complex mTORC1 is constitutively localized to the lysosome and activated. The KICSTOR complex is also probably involved in the regulation of mTORC1 by glucose. The sequence is that of KICSTOR complex protein ITFG2 from Mus musculus (Mouse).